A 905-amino-acid chain; its full sequence is MKVLEDYRSLVHGIGSLDFSGDAVPCKLLLTGDTAFPVLVTPRKDVLIAASRYGKGKVVVMAHESYLNTNAFMDFLKNAVSWLSPNSEANIGVHKGLNLLTDNLSANGSKVQNTSTLIEGLGVFCTIGYDDSQDKQIISFVREGGGLLIGAQAWHWSYSHKQENVLHHFPGNKIISVSGVHFTSDYGEKGNICVMENIPQAPIYTSFDFSLDQKYLLKGMSQLDISGSSIPSDLLLHGTLSFPVGLSENKQCFLGATYYGKGRVVVATHEGYLSKSELKTIMLNAISWLDINQNRRIGVHKGLRQFAELLQKENIPCNISSLDPDLSVYCCTSYSDAEAKAIHEFVAEGGGLLIAGHAWYWSSQNSDLDVLIQYPGNKILNKFGISILDRTIPGGNYNAINPDESSQQYHFRRGLCNLQAELRSGAEVKPPLSIWMNKLRQDVTAFMRLPANPIISSIQSQFVEMMQICEIPNVTKQCPVSSCSKEAFILCLAQECFNVCDESHILEKEPSITVEIDGTNPGNNAWRSTGLYLAPRKTAVLEFPASAVHQGLQVQVGCQSDDLSSADKYCRAPVVVRRFHVDSQRVSVSCFWGGLVYITVKANSNLGIIPVKVYEAEPAPIYIKGKTSLDTWIQSIRNLPAPWAELITENIILTVPSDAIRSLSDPEALLSLWDKIMVAITELAAIPKKLPRPERFVADVQISAGWMHAGYPIMCHLESAKELTDLNIMQTGGIWGPIHELGHNQQKTNWELPPHTTEATCNLWSVYVHETVLGIPRSQAHCCLQAETRANHIQEYLRNGSNIEQWNVWTALETYLQLQEGFGWEPFKQLFKDYQSMSGIRNENKSKMNLWAEKFSEAVQTNLVPFFEAWGWPIEEATHSKLSVLPVWEKDPMKSYLSARKSNSN.

The 300-residue stretch at 524 to 823 folds into the Peptidase M60 domain; it reads NAWRSTGLYL…TYLQLQEGFG (300 aa).

This sequence belongs to the TCAF family.

May play a role in the regulation of the cation channel TRPM8 activity. This Xenopus laevis (African clawed frog) protein is TRPM8 channel-associated factor homolog (tcaf).